A 94-amino-acid chain; its full sequence is Immune protein Tsi6 (94 aa).

Immunity protein that plays a role in preventing early activation of toxin Tse6. This chain is Immune protein Tsi6, found in Pseudomonas aeruginosa (strain ATCC 15692 / DSM 22644 / CIP 104116 / JCM 14847 / LMG 12228 / 1C / PRS 101 / PAO1).